A 191-amino-acid polypeptide reads, in one-letter code: Photosystem I assembly protein Ycf4 (191 aa).

The next 2 membrane-spanning stretches (helical) occupy residues 34 to 54 (VASMLSIGGVGFLLASFSSYF) and 68 to 88 (IFVPQGLVMGLYGVAAFLLAI).

Belongs to the Ycf4 family.

The protein localises to the cellular thylakoid membrane. Its function is as follows. Seems to be required for the assembly of the photosystem I complex. The protein is Photosystem I assembly protein Ycf4 of Prochlorococcus marinus (strain NATL2A).